A 230-amino-acid chain; its full sequence is 2,3-bisphosphoglycerate-dependent phosphoglycerate mutase 1 (230 aa).

Substrate is bound by residues 8–15 (RHGQSEWN), 21–22 (TG), Arg60, 87–90 (ERHY), Lys98, 114–115 (RR), and 183–184 (GN). The Tele-phosphohistidine intermediate role is filled by His9. Glu87 serves as the catalytic Proton donor/acceptor.

This sequence belongs to the phosphoglycerate mutase family. BPG-dependent PGAM subfamily.

It carries out the reaction (2R)-2-phosphoglycerate = (2R)-3-phosphoglycerate. It functions in the pathway carbohydrate degradation; glycolysis; pyruvate from D-glyceraldehyde 3-phosphate: step 3/5. Functionally, catalyzes the interconversion of 2-phosphoglycerate and 3-phosphoglycerate. The polypeptide is 2,3-bisphosphoglycerate-dependent phosphoglycerate mutase 1 (Lactobacillus johnsonii (strain CNCM I-12250 / La1 / NCC 533)).